The primary structure comprises 1413 residues: DNA-directed RNA polymerase subunit beta' (1413 aa).

Positions 70, 72, 85, and 88 each coordinate Zn(2+). Residues D460, D462, and D464 each contribute to the Mg(2+) site. Zn(2+)-binding residues include C819, C893, C900, and C903. The segment at 1393 to 1413 is disordered; that stretch reads EAFEFGTPETPAAEQTPHTNE.

This sequence belongs to the RNA polymerase beta' chain family. In terms of assembly, the RNAP catalytic core consists of 2 alpha, 1 beta, 1 beta' and 1 omega subunit. When a sigma factor is associated with the core the holoenzyme is formed, which can initiate transcription. Requires Mg(2+) as cofactor. Zn(2+) serves as cofactor.

The enzyme catalyses RNA(n) + a ribonucleoside 5'-triphosphate = RNA(n+1) + diphosphate. Its function is as follows. DNA-dependent RNA polymerase catalyzes the transcription of DNA into RNA using the four ribonucleoside triphosphates as substrates. This is DNA-directed RNA polymerase subunit beta' from Paraburkholderia phymatum (strain DSM 17167 / CIP 108236 / LMG 21445 / STM815) (Burkholderia phymatum).